We begin with the raw amino-acid sequence, 127 residues long: Cuticle protein 4 (127 aa).

Gln1 carries the pyrrolidone carboxylic acid modification. 2 tandem repeats follow at residues 31–39 (PADTKKAEI) and 84–92 (PADTKKAEI).

This is Cuticle protein 4 from Blaberus craniifer (Death's head cockroach).